Here is a 164-residue protein sequence, read N- to C-terminus: Peptidyl-prolyl cis-trans isomerase (164 aa).

In terms of domain architecture, PPIase cyclophilin-type spans 7–163; sequence FFDLQANGEN…KKITIADCGQ (157 aa).

It belongs to the cyclophilin-type PPIase family. PPIase A subfamily.

The protein resides in the cytoplasm. It carries out the reaction [protein]-peptidylproline (omega=180) = [protein]-peptidylproline (omega=0). Binds cyclosporin A (CsA). CsA mediates some of its effects via an inhibitory action on PPIase. Its function is as follows. PPIases accelerate the folding of proteins. It catalyzes the cis-trans isomerization of proline imidic peptide bonds in oligopeptides. The sequence is that of Peptidyl-prolyl cis-trans isomerase from Hemicentrotus pulcherrimus (Sea urchin).